The following is a 64-amino-acid chain: Large ribosomal subunit protein bL35 (64 aa).

This sequence belongs to the bacterial ribosomal protein bL35 family.

This chain is Large ribosomal subunit protein bL35, found in Acinetobacter baylyi (strain ATCC 33305 / BD413 / ADP1).